We begin with the raw amino-acid sequence, 225 residues long: uncharacterized protein (225 aa).

This is an uncharacterized protein from Arabidopsis thaliana (Mouse-ear cress).